The sequence spans 86 residues: Myosin light chain alkali (86 aa).

The region spanning 11 to 46 (GCYEDFIECLKLYDKEENGTMMLAELQHALLALGES) is the EF-hand domain.

Myosin is a hexamer of 2 heavy chains and 4 light chains.

This chain is Myosin light chain alkali (Mlc1), found in Drosophila subobscura (Fruit fly).